We begin with the raw amino-acid sequence, 419 residues long: L-rhamnose isomerase (419 aa).

Residues His-262, Asp-294, and Asp-296 each coordinate Mn(2+).

It belongs to the rhamnose isomerase family. Homotetramer. Mn(2+) is required as a cofactor.

It is found in the cytoplasm. The catalysed reaction is L-rhamnopyranose = L-rhamnulose. It participates in carbohydrate degradation; L-rhamnose degradation; glycerone phosphate from L-rhamnose: step 1/3. Functionally, catalyzes the interconversion of L-rhamnose and L-rhamnulose. This is L-rhamnose isomerase from Escherichia coli (strain 55989 / EAEC).